A 382-amino-acid polypeptide reads, in one-letter code: Beta-1,4-galactosyltransferase 6 (382 aa).

The Cytoplasmic portion of the chain corresponds to 1–14 (MSVLRRMMRVSNRS). The chain crosses the membrane as a helical; Signal-anchor for type II membrane protein span at residues 15–35 (LLAFIFFFSLSSSCLYFIYVA). The Lumenal portion of the chain corresponds to 36–382 (PGIANTYLFM…MPELAPIEDY (347 aa)). N-linked (GlcNAc...) asparagine glycans are attached at residues asparagine 71, asparagine 75, asparagine 83, asparagine 84, asparagine 99, and asparagine 122. An intrachain disulfide couples cysteine 108 to cysteine 152. Residues 163 to 167 (PFRNR), 202 to 204 (FNR), 229 to 230 (VD), tyrosine 258, and tryptophan 290 each bind UDP-alpha-D-galactose. A disulfide bond links cysteine 223 and cysteine 242. Position 230 (aspartate 230) interacts with Mn(2+). 292-295 (GEDD) contributes to the N-acetyl-D-glucosamine binding site. N-linked (GlcNAc...) asparagine glycosylation occurs at asparagine 307. Position 323 (histidine 323) interacts with Mn(2+). Residue 323 to 324 (HH) coordinates UDP-alpha-D-galactose. Arginine 334 lines the N-acetyl-D-glucosamine pocket. N-linked (GlcNAc...) asparagine glycosylation occurs at asparagine 367.

The protein belongs to the glycosyltransferase 7 family. Mn(2+) serves as cofactor. The cofactor is Mg(2+). High expression in brain and adrenal gland, lower in liver, lung, colon and peripheral white blood cells.

The protein resides in the golgi apparatus. The protein localises to the golgi stack membrane. The enzyme catalyses a beta-D-glucosyl-(1&lt;-&gt;1')-N-acylsphing-4-enine + UDP-alpha-D-galactose = a beta-D-Gal-(1-&gt;4)-beta-D-Glc-(1&lt;-&gt;1)-Cer(d18:1(4E)) + UDP + H(+). The protein operates within protein modification; protein glycosylation. It participates in sphingolipid metabolism. Inhibited by EDTA. Its function is as follows. Catalyzes the synthesis of lactosylceramide (LacCer) via the transfer of galactose from UDP-galactose to glucosylceramide (GlcCer). LacCer is the starting point in the biosynthesis of all gangliosides (membrane-bound glycosphingolipids) which play pivotal roles in the CNS including neuronal maturation and axonal and myelin formation. The protein is Beta-1,4-galactosyltransferase 6 of Homo sapiens (Human).